The sequence spans 263 residues: Dihydropteroate synthase type-3 (263 aa).

In terms of domain architecture, Pterin-binding spans 2–257 (SKIFGIVNIT…DVKSLSDALK (256 aa)). Residue Asn9 coordinates Mg(2+). Ser49 serves as a coordination point for 4-aminobenzoate. (7,8-dihydropterin-6-yl)methyl diphosphate is bound by residues Asp82, Asn101, and Asp172. Residues Asn101 and Asp172 each contribute to the 6-hydroxymethyl-7,8-dihydropterin site. Phe177 is a binding site for 4-aminobenzoate. Residue Lys211 coordinates (7,8-dihydropterin-6-yl)methyl diphosphate. Lys211 is a 6-hydroxymethyl-7,8-dihydropterin binding site. Position 212 (Ser212) interacts with 4-aminobenzoate. (7,8-dihydropterin-6-yl)methyl diphosphate is bound at residue 245-247 (RTH).

It belongs to the DHPS family. Mg(2+) is required as a cofactor.

The catalysed reaction is (7,8-dihydropterin-6-yl)methyl diphosphate + 4-aminobenzoate = 7,8-dihydropteroate + diphosphate. Its pathway is cofactor biosynthesis; tetrahydrofolate biosynthesis; 7,8-dihydrofolate from 2-amino-4-hydroxy-6-hydroxymethyl-7,8-dihydropteridine diphosphate and 4-aminobenzoate: step 1/2. Functionally, catalyzes the condensation of para-aminobenzoate (pABA) with 6-hydroxymethyl-7,8-dihydropterin diphosphate (DHPt-PP) to form 7,8-dihydropteroate (H2Pte), the immediate precursor of folate derivatives. Confers resistance to sulfonamide antibiotics, including sulfamethoxazole (SMX), sulfadiazine and sulfisoxazole. The protein is Dihydropteroate synthase type-3 of Escherichia coli.